We begin with the raw amino-acid sequence, 872 residues long: G-type lectin S-receptor-like serine/threonine-protein kinase At5g35370 (872 aa).

The signal sequence occupies residues 1–26 (MKSTFLLLLLLLSLNLLFVFVSCASS). At 27–443 (IEFVYPNFTA…NNNRGGSSFP (417 aa)) the chain is on the extracellular side. N-linked (GlcNAc...) asparagine glycans are attached at residues N33, N148, and N239. In terms of domain architecture, Bulb-type lectin spans 35–156 (TASNLRFVDS…LNVSLWESFD (122 aa)). Residues 283–322 (PMDSCQIPFVCGKLGLCNLDNASENQSCSCPDEMRMDAGK) form the EGF-like; atypical domain. 2 cysteine pairs are disulfide-bonded: C287-C299 and C293-C310. N-linked (GlcNAc...) asparagine glycans are attached at residues N303, N307, N342, N379, and N389. Positions 338–423 (CEARNISYLE…HDLIGYVKLS (86 aa)) constitute a PAN domain. Cystine bridges form between C372/C394 and C376/C382. Residues 444–464 (VIALVLLPCSGFFLLIALGLL) form a helical membrane-spanning segment. Residues 465–872 (WWRRCAVMRY…IASQEVSGPR (408 aa)) lie on the Cytoplasmic side of the membrane. In terms of domain architecture, Protein kinase spans 515–814 (ENFKMQIGSG…GSIPLGNPRM (300 aa)). ATP is bound by residues 521-529 (IGSGGFGSV) and K543. Residues 603–620 (GNGPVLEWQERFDIALGT) form a caM-binding region. The Proton acceptor role is filled by D639. The residue at position 656 (S656) is a Phosphoserine. T673 carries the phosphothreonine modification. Residues S716 and S859 each carry the phosphoserine modification. A disordered region spans residues 836 to 872 (QNGESETMVFHRRESSNSGGSRQSASYIASQEVSGPR). Positions 851 to 861 (SNSGGSRQSAS) are enriched in low complexity. A compositionally biased stretch (polar residues) spans 862 to 872 (YIASQEVSGPR).

Belongs to the protein kinase superfamily. Ser/Thr protein kinase family.

The protein resides in the cell membrane. It carries out the reaction L-seryl-[protein] + ATP = O-phospho-L-seryl-[protein] + ADP + H(+). The enzyme catalyses L-threonyl-[protein] + ATP = O-phospho-L-threonyl-[protein] + ADP + H(+). This Arabidopsis thaliana (Mouse-ear cress) protein is G-type lectin S-receptor-like serine/threonine-protein kinase At5g35370.